The sequence spans 178 residues: Adenine phosphoribosyltransferase (178 aa).

The protein belongs to the purine/pyrimidine phosphoribosyltransferase family. As to quaternary structure, homodimer.

It is found in the cytoplasm. It catalyses the reaction AMP + diphosphate = 5-phospho-alpha-D-ribose 1-diphosphate + adenine. The protein operates within purine metabolism; AMP biosynthesis via salvage pathway; AMP from adenine: step 1/1. Its function is as follows. Catalyzes a salvage reaction resulting in the formation of AMP, that is energically less costly than de novo synthesis. This chain is Adenine phosphoribosyltransferase, found in Bacteroides fragilis (strain YCH46).